Consider the following 339-residue polypeptide: Deoxyguanosinetriphosphate triphosphohydrolase-like protein (339 aa).

The region spanning 75–186 (RLTHTLEVAQ…VQISDKIAYI (112 aa)) is the HD domain.

This sequence belongs to the dGTPase family. Type 2 subfamily.

The polypeptide is Deoxyguanosinetriphosphate triphosphohydrolase-like protein (Caldanaerobacter subterraneus subsp. tengcongensis (strain DSM 15242 / JCM 11007 / NBRC 100824 / MB4) (Thermoanaerobacter tengcongensis)).